The following is a 494-amino-acid chain: Hepatic triacylglycerol lipase (494 aa).

Positions 1-21 are cleaved as a signal peptide; the sequence is MGNHLQISVSLVLCIFIQSSA. The N-linked (GlcNAc...) asparagine glycan is linked to asparagine 79. The active-site Nucleophile is the serine 169. Aspartate 195 serves as the catalytic Charge relay system. Positions 255 to 278 are essential for determining substrate specificity; sequence CHFLELYKHIAEHGLNAITQTINC. Histidine 280 acts as the Charge relay system in catalysis. A PLAT domain is found at 353–487; sequence YHYQFKIQFI…HPTQEKVFVK (135 aa). A glycan (N-linked (GlcNAc...) asparagine) is linked at asparagine 398.

It belongs to the AB hydrolase superfamily. Lipase family. In terms of assembly, homodimer.

It localises to the secreted. The catalysed reaction is a triacylglycerol + H2O = a diacylglycerol + a fatty acid + H(+). The enzyme catalyses a 1-acyl-sn-glycero-3-phosphocholine + H2O = sn-glycerol 3-phosphocholine + a fatty acid + H(+). It catalyses the reaction a 1,2-diacyl-sn-glycero-3-phosphocholine + H2O = a 2-acyl-sn-glycero-3-phosphocholine + a fatty acid + H(+). It carries out the reaction 1,2-di-(9Z-octadecenoyl)-sn-glycerol + H2O = 2-(9Z-octadecenoyl)-glycerol + (9Z)-octadecenoate + H(+). The catalysed reaction is 1,2,3-tri-(9Z-octadecenoyl)-glycerol + H2O = 2,3-di-(9Z)-octadecenoyl-sn-glycerol + (9Z)-octadecenoate + H(+). The enzyme catalyses 1-(9Z-octadecenoyl)-sn-glycero-3-phospho-L-serine + H2O = sn-glycero-3-phospho-L-serine + (9Z)-octadecenoate + H(+). It catalyses the reaction 1-hexadecanoyl-sn-glycero-3-phosphocholine + H2O = sn-glycerol 3-phosphocholine + hexadecanoate + H(+). It carries out the reaction 1,3-di-(9Z-octadecenoyl)-glycerol + H2O = 3-(9Z-octadecenoyl)-sn-glycerol + (9Z)-octadecenoate + H(+). The catalysed reaction is 1,2,3-tri-(9Z-octadecenoyl)-glycerol + H2O = di-(9Z)-octadecenoylglycerol + (9Z)-octadecenoate + H(+). The enzyme catalyses 1,2-di-(9Z-octadecenoyl)-sn-glycero-3-phosphocholine + H2O = (9Z-octadecenoyl)-sn-glycero-3-phosphocholine + (9Z)-octadecenoate + H(+). It catalyses the reaction 1,2,3-tributanoylglycerol + H2O = dibutanoylglycerol + butanoate + H(+). It carries out the reaction 1,2-dihexadecanoyl-sn-glycero-3-phosphocholine + H2O = hexadecanoyl-sn-glycero-3-phosphocholine + hexadecanoate + H(+). Phospholipase A1 and lysophospholipase activities are inhibited by annexin II. Its function is as follows. Catalyzes the hydrolysis of triglycerides and phospholipids present in circulating plasma lipoproteins, including chylomicrons, intermediate density lipoproteins (IDL), low density lipoproteins (LDL) of large size and high density lipoproteins (HDL), releasing free fatty acids (FFA) and smaller lipoprotein particles. Also exhibits lysophospholipase activity. Can hydrolyze both neutral lipid and phospholipid substrates but shows a greater binding affinity for neutral lipid substrates than phospholipid substrates. In native LDL, preferentially hydrolyzes the phosphatidylcholine species containing polyunsaturated fatty acids at sn-2 position. The polypeptide is Hepatic triacylglycerol lipase (Lipc) (Rattus norvegicus (Rat)).